The following is a 305-amino-acid chain: Ribonucleoside-diphosphate reductase small subunit (305 aa).

Fe cation-binding residues include E64, E94, and H97. Y101 is an active-site residue. The chain crosses the membrane as a helical span at residues V150–T170. Fe cation contacts are provided by E157, E191, and H194.

It belongs to the ribonucleoside diphosphate reductase small chain family. Heterotetramer composed of a homodimer of the large subunit (R1) and a homodimer of the small subunit (R2). Larger multisubunit protein complex are also active, composed of (R1)n(R2)n. The cofactor is Fe cation.

It localises to the host membrane. It catalyses the reaction a 2'-deoxyribonucleoside 5'-diphosphate + [thioredoxin]-disulfide + H2O = a ribonucleoside 5'-diphosphate + [thioredoxin]-dithiol. Ribonucleoside-diphosphate reductase holoenzyme provides the precursors necessary for viral DNA synthesis. Allows virus growth in non-dividing cells, as well as reactivation from latency in infected hosts. Catalyzes the biosynthesis of deoxyribonucleotides from the corresponding ribonucleotides. The polypeptide is Ribonucleoside-diphosphate reductase small subunit (Equus caballus (Horse)).